The sequence spans 1140 residues: Calcium-activated potassium channel slo-1 (1140 aa).

The Extracellular segment spans residues 1 to 44; it reads MGEIYSPSQSKGFNQPYGYPMNCNLSRVFMEMTEEDRKCLEERK. Residues 45–65 traverse the membrane as a helical segment; the sequence is YWCFLLSSITTFCASMILVVI. Residues 66–139 lie on the Cytoplasmic side of the membrane; that stretch reads WRVVTHLCCQ…LISGQSLTGR (74 aa). A helical membrane pass occupies residues 140–161; the sequence is FLVLLVFILSIGSLIIYFYDAS. At 162–178 the chain is on the extracellular side; that stretch reads FQNFQVETCIPWQDSPS. Residues 179-199 traverse the membrane as a helical segment; the sequence is QQIDLGFNIFFLVYFFIRFIA. At 200 to 203 the chain is on the cytoplasmic side; it reads ASDK. A helical transmembrane segment spans residues 204–224; the sequence is VWFLLEMYSWIDFFTIPPSFV. Topologically, residues 225–228 are extracellular; sequence AIYL. A helical; Voltage-sensor membrane pass occupies residues 229-249; sequence QRNWLGFRFLRALRLMTVPDI. The Cytoplasmic portion of the chain corresponds to 250 to 264; sequence LQYLNILKTSSSIRL. The chain crosses the membrane as a helical span at residues 265-285; it reads TQLVTIFVAVCLTGAGLVHLL. Topologically, residues 286-299 are extracellular; it reads ENSGDFFKGFINPH. The segment at residues 300–322 is an intramembrane region (pore-forming); it reads RITYADSVYFVLVTMSTVGYGDI. The short motif at 316–319 is the Selectivity for potassium element; the sequence is TVGY. At 323 to 331 the chain is on the extracellular side; that stretch reads YCTTLCGRL. Residues 332 to 352 traverse the membrane as a helical segment; it reads FMIFFILFGLAMFASYVPEIA. The Cytoplasmic portion of the chain corresponds to 353-1140; sequence DLIGNRQKYG…LEYEPGKRHF (788 aa). The RCK N-terminal 1 domain maps to 371-514; it reads KKHIVVCGHI…DWKRGDDVIC (144 aa). The segment S7 stretch occupies residues 520 to 540; sequence LGFIAQSCLAPGFSTMMANLF. Positions 578 to 598 are segment S8; the sequence is MTFPEAVDLLFNRLGLLLLAI. Residues 797–817 form a segment S9 region; the sequence is VLNGHVVVCLFADQDSPLIGL. One can recognise an RCK N-terminal 2 domain in the interval 799–953; sequence NGHVVVCLFA…GAKFGTNVPM (155 aa). Residues 955–977 carry the Calcium bowl motif; sequence TELVNDSNVQFLDQDDDDDPDTE. Residues Q964, D967, D970, and D972 each coordinate Ca(2+). A segment S10 region spans residues 984-1004; sequence FACGTAFAISVLDSLMSTTYF.

It belongs to the potassium channel family. Calcium-activated (TC 1.A.1.3) subfamily. Slo sub-subfamily. As to quaternary structure, homotetramer; which constitutes the calcium-activated potassium channel. In terms of processing, phosphorylated. In terms of tissue distribution, expressed in synaptic regions of the nervous system including in both the nerve ring and nerve cords, as well as in the body-wall and vulval muscle. Expressed broadly in motor neurons. Forms puncta at presynaptic terminals of neurons, muscle excitation sites, and in the dorsal nerve cord.

The protein resides in the cell membrane. Its subcellular location is the synapse. Functionally, potassium channel activated by both membrane depolarization or increase in cytosolic Ca(2+) that mediates export of K(+). Its activation dampens the excitatory events that elevate the cytosolic Ca(2+) concentration and/or depolarize the cell membrane. It therefore contributes to repolarization of the membrane potential. Essential for the regulation of neurotransmitter release at synapses. Regulates longevity and age-associated decline in motor activity in mid-late life, by acting in motor neurons and through daf-16 in the intestine. When clustered in neurons, mediates ethanol-induced suppression of locomotory and egg-laying behaviors. The chain is Calcium-activated potassium channel slo-1 from Caenorhabditis elegans.